The chain runs to 756 residues: Protease KEX1 (756 aa).

A signal peptide spans 1-24 (MILSSQLMLALIAVSGYGKAMQVP). Asn121, Asn144, and Asn152 each carry an N-linked (GlcNAc...) asparagine glycan. One can recognise a Peptidase S8 domain in the interval 130 to 440 (QWHLINPNYP…FGKLDAYNIV (311 aa)). Catalysis depends on charge relay system residues Asp164 and His202. 2 disulfide bridges follow: Cys218–Cys365 and Cys310–Cys340. The Charge relay system role is filled by Ser373. 2 N-linked (GlcNAc...) asparagine glycosylation sites follow: Asn392 and Asn538. In terms of domain architecture, P/Homo B spans 449 to 583 (VNPQGWLYLP…RLKMFGETID (135 aa)). Residues 599-632 (AEVKSTESKTTTPTAQTSSFTTTSGEETSGANKL) are disordered. The segment covering 606-628 (SKTTTPTAQTSSFTTTSGEETSG) has biased composition (low complexity). A helical membrane pass occupies residues 641–661 (LYLAIFVIGAIVIIIYYLFFL). A disordered region spans residues 715 to 756 (EEELSPRESSSNNPFGNESLESFDNSPDHTSNLLGQNSIPNK). The span at 721–756 (RESSSNNPFGNESLESFDNSPDHTSNLLGQNSIPNK) shows a compositional bias: polar residues.

The protein belongs to the peptidase S8 family. Furin subfamily. It depends on Ca(2+) as a cofactor.

The protein localises to the membrane. Functionally, probably involved in the processing of the precursor of m1-toxin and alpha-factor. The protein is Protease KEX1 (KEX1) of Kluyveromyces lactis (strain ATCC 8585 / CBS 2359 / DSM 70799 / NBRC 1267 / NRRL Y-1140 / WM37) (Yeast).